The chain runs to 470 residues: Sugar transporter ESL1 (470 aa).

The short motif at 10–16 (LEAGLLL) is the Essential for the localization to the vacuole membrane element. A run of 12 helical transmembrane segments spans residues 28 to 48 (ITAV…CFGC), 68 to 88 (VAQY…GAIF), 99 to 119 (KGTM…VALA), 130 to 150 (LSTG…IAEI), 157 to 177 (GAFV…FYVI), 186 to 206 (LALI…FIPE), 268 to 288 (VVIG…GLMY), 303 to 323 (IGSM…LILV), 332 to 352 (LLAS…SFCF), 368 to 388 (IGVV…PWII), 404 to 424 (LVTL…NFML), and 430 to 450 (GTFL…YAMV).

The protein belongs to the major facilitator superfamily. Sugar transporter (TC 2.A.1.1) family. Expressed in both shoots and roots. In roots, strongly expressed in pericycle and xylem parenchyma cells, and to a lesser extent in the root endodermis. In flowers, expressed in sepals.

Its subcellular location is the vacuole membrane. It localises to the vesicle. In terms of biological role, sugar transporter. Transports monosaccharides across the vacuolar membrane independently from a proton gradient. May function coordinately with the vacuolar invertase to regulate osmotic pressure by affecting the accumulation of sugar in the cells under abiotic stress conditions. The polypeptide is Sugar transporter ESL1 (Arabidopsis thaliana (Mouse-ear cress)).